An 87-amino-acid polypeptide reads, in one-letter code: MNSKVFAVLLLLALLTCVLSEKYCPTPRNTSCKKMNIRNNCCRDSDCTSNAFCCAEPCGNFCHKASDKPGGRRVDPNASCQTGYVYW.

The N-terminal stretch at 1–20 (MNSKVFAVLLLLALLTCVLS) is a signal peptide. Positions 21 to 66 (EKYCPTPRNTSCKKMNIRNNCCRDSDCTSNAFCCAEPCGNFCHKAS) constitute a WAP domain. Disulfide bonds link C24–C54, C32–C58, C41–C53, C42–C80, and C47–C62.

This sequence belongs to the venom protein 11 family. 01 (wap-1) subfamily. In terms of processing, contains 5 disulfide bonds. Expressed by the venom gland.

The protein localises to the secreted. In terms of biological role, has antibacterial activity. The polypeptide is U14-lycotoxin-Ls1a (Lycosa singoriensis (Wolf spider)).